Consider the following 640-residue polypeptide: MGKIIGIDLGTTNSCVALMEGNKPRVIENAEGDRTTPSVVAFTKEGETLVGQSAKRQAITNPQNTLYAIKRLIGRRFDEEVVQRDIKMVPYKIVKADNGDAWVEATGKKMAPPEVSANVLRKMKKTAEDYLGEEVEAAVITVPAYFNDSQRQATKDAGRIAGLEVKRIINEPTAAALAYGLDKKRGDQKIAVYDLGGGTFDVSIIEIAEVEGEHQFEVLSTNGDTFLGGEDFDKRIIDYIAEEFKKEQSIDLRGDPLAMQRLKDAAEKAKIELSSSQQTEVNLPYVTADASGPKHLNVRITRAKLESLVEDLINRTIGPCKTALQDAKLSASDIDEVILVGGQTRMPKVQEAAKEFFGKEPRKDVNPDEAVAVGAAIQAGVLGGEVKEVLLLDVTPLSLGIETLGGVMTKLIEKNTTIPTRKTQVFSTAEDNQTAVTVHVLQGEREQAVGNKSLGRFDLVGIPPAHRGMPQIEVTFDIDANGILNVSAKDKATGKEQSIVIKASSGLAEGEIERMVSDAEAHVEEDRKFRELVDLRNQGDNLIHATEKSMEELGDKLEANEKSEIEKTIGELKTAMKEDNKEVIEARIKDLTDASAKMAERLYTQQAEEPQPQKEEGKAAEEDVVDAEFEEVKEDKNKAS.

At threonine 199 the chain carries Phosphothreonine; by autocatalysis. The segment at 603–640 is disordered; that stretch reads YTQQAEEPQPQKEEGKAAEEDVVDAEFEEVKEDKNKAS. The span at 611 to 621 shows a compositional bias: basic and acidic residues; the sequence is QPQKEEGKAAE. A compositionally biased stretch (acidic residues) spans 622-632; it reads EDVVDAEFEEV.

It belongs to the heat shock protein 70 family.

Acts as a chaperone. In Nitrosococcus oceani (strain ATCC 19707 / BCRC 17464 / JCM 30415 / NCIMB 11848 / C-107), this protein is Chaperone protein DnaK.